The primary structure comprises 163 residues: Ribosome maturation factor RimM (163 aa).

A PRC barrel domain is found at 94 to 162 (ADEYYYIDLI…DHLVIAADFI (69 aa)).

This sequence belongs to the RimM family. In terms of assembly, binds ribosomal protein uS19.

The protein resides in the cytoplasm. An accessory protein needed during the final step in the assembly of 30S ribosomal subunit, possibly for assembly of the head region. Essential for efficient processing of 16S rRNA. May be needed both before and after RbfA during the maturation of 16S rRNA. It has affinity for free ribosomal 30S subunits but not for 70S ribosomes. The sequence is that of Ribosome maturation factor RimM from Zymomonas mobilis subsp. mobilis (strain ATCC 31821 / ZM4 / CP4).